We begin with the raw amino-acid sequence, 102 residues long: Salivary thrombin inhibitor anophelin (102 aa).

Positions 1-21 are cleaved as a signal peptide; that stretch reads MATKLIVIAFLCAALIAVVQS. Positions 25-102 are disordered; it reads YAQGEEPTYD…SDSSSESTEH (78 aa). A compositionally biased stretch (polar residues) spans 59–69; it reads SQLTEYANTAQ. Residues 70-73 form a blocks active site cleft of host thrombin in a reverse direction compared to substrates region; it reads DPGR. Over residues 80–90 the composition is skewed to polar residues; that stretch reads QANSNNGDQLP. Residues 91–102 show a composition bias toward low complexity; the sequence is SQSDSSSESTEH.

The protein belongs to the anophelin family. As to quaternary structure, interacts with human F2 (thrombin); the interaction results in thrombin inhibition.

It is found in the secreted. Its function is as follows. Salivary protein with anticoagulant activity that inhibits host thrombin (F2). This is Salivary thrombin inhibitor anophelin from Anopheles funestus (African malaria mosquito).